Consider the following 462-residue polypeptide: MKLWGGRFTKETNQLVHNFNASISFDQKFYVQDIRGSIAHVTMLAKQGILNDEEKNKIIDGLNGIRDDIESGSLVIDSTYEDIHSFVEAHLISRIEEIGKKLHTGRSRNDQVALDMKLYTRDEITVLDELLRDLLFELYSLMKEHTETYMPGFTHLQKAQPITLSHHMSAYFEMFRRDRDRLSDIFKRMNTCPLGAGALAGTTYPLDRAYTASLLSFTEPTRNSMDSVSDRDYLIELLSALSTIMMHLSRFSEEIIIWNTNEYRFVEIDDAYSTGSSIMPQKKNPDIAELVRGKTGRVYGALMSLLTTMKGLPLAYNKDMQEDKELTFDAIDTVKGCLSLFTGMIRTMKFNRDTMKASAVLGFTNATDAADYLVNHGVAFRDAHGIIGHLVLTCIEKNCSIEDLSLTELQAISPVFKEDIYDAISLKTCVEKRNTIGGPGVDAMNEVIKECAKYLENNPSIS.

The protein belongs to the lyase 1 family. Argininosuccinate lyase subfamily.

The protein resides in the cytoplasm. It carries out the reaction 2-(N(omega)-L-arginino)succinate = fumarate + L-arginine. Its pathway is amino-acid biosynthesis; L-arginine biosynthesis; L-arginine from L-ornithine and carbamoyl phosphate: step 3/3. The chain is Argininosuccinate lyase from Lachnoclostridium phytofermentans (strain ATCC 700394 / DSM 18823 / ISDg) (Clostridium phytofermentans).